Consider the following 215-residue polypeptide: MKPFTQHTGLVCPLDRVNVDTDQIIPKQFLKSIKRTGFGPNLFDEWRYLDAGQPGQDNSKRPINSDFVLNLPRYRGASVLLARDNFGCGSSREHAAWALDEYGFRTVIAPSFADIFFNNSFKNGLLPLVLNKVEVDALFAQCQVTEGYTLTVDLAAQQVITPDGTTYAFQIDTFRKHCLLNGLDDIGLTLQYAEAIRAFEATHRIRQPWLFAPLR.

The protein belongs to the LeuD family. LeuD type 1 subfamily. As to quaternary structure, heterodimer of LeuC and LeuD.

The catalysed reaction is (2R,3S)-3-isopropylmalate = (2S)-2-isopropylmalate. It participates in amino-acid biosynthesis; L-leucine biosynthesis; L-leucine from 3-methyl-2-oxobutanoate: step 2/4. In terms of biological role, catalyzes the isomerization between 2-isopropylmalate and 3-isopropylmalate, via the formation of 2-isopropylmaleate. The protein is 3-isopropylmalate dehydratase small subunit of Xylella fastidiosa (strain M12).